The following is a 182-amino-acid chain: Adenine phosphoribosyltransferase (182 aa).

It belongs to the purine/pyrimidine phosphoribosyltransferase family. Homodimer.

It is found in the cytoplasm. It carries out the reaction AMP + diphosphate = 5-phospho-alpha-D-ribose 1-diphosphate + adenine. Its pathway is purine metabolism; AMP biosynthesis via salvage pathway; AMP from adenine: step 1/1. Functionally, catalyzes a salvage reaction resulting in the formation of AMP, that is energically less costly than de novo synthesis. In Wolinella succinogenes (strain ATCC 29543 / DSM 1740 / CCUG 13145 / JCM 31913 / LMG 7466 / NCTC 11488 / FDC 602W) (Vibrio succinogenes), this protein is Adenine phosphoribosyltransferase.